Reading from the N-terminus, the 248-residue chain is 4-hydroxy-tetrahydrodipicolinate reductase (248 aa).

NAD(+)-binding positions include 9 to 14, 77 to 79, and 104 to 107; these read GAQGRV, GTT, and APNF. H134 (proton donor/acceptor) is an active-site residue. Position 135 (H135) interacts with (S)-2,3,4,5-tetrahydrodipicolinate. K138 acts as the Proton donor in catalysis. (S)-2,3,4,5-tetrahydrodipicolinate is bound at residue 144 to 145; the sequence is GT. Residues 157-176 are disordered; that stretch reads RREAGMPTQPDATEQSLDGA.

It belongs to the DapB family.

The protein localises to the cytoplasm. The enzyme catalyses (S)-2,3,4,5-tetrahydrodipicolinate + NAD(+) + H2O = (2S,4S)-4-hydroxy-2,3,4,5-tetrahydrodipicolinate + NADH + H(+). The catalysed reaction is (S)-2,3,4,5-tetrahydrodipicolinate + NADP(+) + H2O = (2S,4S)-4-hydroxy-2,3,4,5-tetrahydrodipicolinate + NADPH + H(+). It participates in amino-acid biosynthesis; L-lysine biosynthesis via DAP pathway; (S)-tetrahydrodipicolinate from L-aspartate: step 4/4. Catalyzes the conversion of 4-hydroxy-tetrahydrodipicolinate (HTPA) to tetrahydrodipicolinate. The chain is 4-hydroxy-tetrahydrodipicolinate reductase from Corynebacterium diphtheriae (strain ATCC 700971 / NCTC 13129 / Biotype gravis).